The chain runs to 297 residues: tRNA(Ile)-lysidine synthase (297 aa).

16–21 (SGGSDS) contacts ATP.

The protein belongs to the tRNA(Ile)-lysidine synthase family.

Its subcellular location is the cytoplasm. It catalyses the reaction cytidine(34) in tRNA(Ile2) + L-lysine + ATP = lysidine(34) in tRNA(Ile2) + AMP + diphosphate + H(+). Its function is as follows. Ligates lysine onto the cytidine present at position 34 of the AUA codon-specific tRNA(Ile) that contains the anticodon CAU, in an ATP-dependent manner. Cytidine is converted to lysidine, thus changing the amino acid specificity of the tRNA from methionine to isoleucine. This chain is tRNA(Ile)-lysidine synthase, found in Mesomycoplasma hyopneumoniae (strain 232) (Mycoplasma hyopneumoniae).